The primary structure comprises 393 residues: MNIHEYQAKALFEKFGVLVPKGAPAKTPEEFVTALAQLPEGMIVVKSQIHAGGRGKGTFTDGFKGGVKVCKSKAEAREAAGKMLGNTLVTAQTGPAGRKVQTIYFNVGSQIKKEYYLAILLDRATSRPVIVASTEGGMEIEKVAHDTPDRIFKVHVDPAYGLADFQVRELVFKLGFTAAEGKNASKLIRALYRCFWENDASMVEVNPLITTPDGQVEALDAKVAFDDNALFRHPELVELRDLNEEDPKEIEASKHELNYIALDGNIACLVNGAGLAMSTMDIIKHFGGTPANFLDVGGGASREQVVAAFKIILGDKNVRGILVNIFGGIMDCNVIAQGIVDAVKEVGLELPLVVRLEGNNVAAGKATLATSGLKLVSGDSMADAAQKIVKLVA.

One can recognise an ATP-grasp domain in the interval 9-251 (KALFEKFGVL…LNEEDPKEIE (243 aa)). ATP-binding positions include K46, 53–55 (GRG), S109, and E114. Mg(2+)-binding residues include N206 and D220. Residues N271 and 328–330 (GIM) each bind substrate.

The protein belongs to the succinate/malate CoA ligase beta subunit family. Heterotetramer of two alpha and two beta subunits. Mg(2+) is required as a cofactor.

It carries out the reaction succinate + ATP + CoA = succinyl-CoA + ADP + phosphate. The catalysed reaction is GTP + succinate + CoA = succinyl-CoA + GDP + phosphate. It functions in the pathway carbohydrate metabolism; tricarboxylic acid cycle; succinate from succinyl-CoA (ligase route): step 1/1. Its function is as follows. Succinyl-CoA synthetase functions in the citric acid cycle (TCA), coupling the hydrolysis of succinyl-CoA to the synthesis of either ATP or GTP and thus represents the only step of substrate-level phosphorylation in the TCA. The beta subunit provides nucleotide specificity of the enzyme and binds the substrate succinate, while the binding sites for coenzyme A and phosphate are found in the alpha subunit. This Opitutus terrae (strain DSM 11246 / JCM 15787 / PB90-1) protein is Succinate--CoA ligase [ADP-forming] subunit beta.